Consider the following 544-residue polypeptide: Methionine--tRNA ligase (544 aa).

The 'HIGH' region signature appears at 10–20; that stretch reads PYANGSLHLGH. The Zn(2+) site is built by cysteine 141, cysteine 144, cysteine 153, and cysteine 156. The short motif at 329–333 is the 'KMSKS' region element; the sequence is KLSTS. ATP is bound at residue threonine 332.

It belongs to the class-I aminoacyl-tRNA synthetase family. MetG type 1 subfamily. As to quaternary structure, monomer. The cofactor is Zn(2+).

The protein resides in the cytoplasm. It catalyses the reaction tRNA(Met) + L-methionine + ATP = L-methionyl-tRNA(Met) + AMP + diphosphate. Functionally, is required not only for elongation of protein synthesis but also for the initiation of all mRNA translation through initiator tRNA(fMet) aminoacylation. This chain is Methionine--tRNA ligase, found in Bacillus cereus (strain AH187).